A 334-amino-acid polypeptide reads, in one-letter code: GTPase Obg (334 aa).

Positions 1 to 159 (MKFVDSASVR…REIGLELSVM (159 aa)) constitute an Obg domain. Positions 160 to 332 (ADIGLLGIPN…LVAGLFKLVL (173 aa)) constitute an OBG-type G domain. Residues 166–173 (GIPNAGKS), 191–195 (FTTLH), 212–215 (DIPG), 282–285 (NKID), and 313–315 (SAL) each bind GTP. Ser173 and Thr193 together coordinate Mg(2+).

This sequence belongs to the TRAFAC class OBG-HflX-like GTPase superfamily. OBG GTPase family. As to quaternary structure, monomer. Mg(2+) is required as a cofactor.

The protein resides in the cytoplasm. Functionally, an essential GTPase which binds GTP, GDP and possibly (p)ppGpp with moderate affinity, with high nucleotide exchange rates and a fairly low GTP hydrolysis rate. Plays a role in control of the cell cycle, stress response, ribosome biogenesis and in those bacteria that undergo differentiation, in morphogenesis control. This Vesicomyosocius okutanii subsp. Calyptogena okutanii (strain HA) protein is GTPase Obg.